Consider the following 294-residue polypeptide: uncharacterized protein (294 aa).

The disordered stretch occupies residues 1-215 (MTTAITPDKK…DQDDDDQKDL (215 aa)). Basic residues-rich tracts occupy residues 27–43 (TKPR…KSKK) and 50–78 (AKKR…KKAP). Residues 79-88 (MKAPSKPAAK) are compositionally biased toward low complexity. The span at 92–102 (QQAQASLQKPI) shows a compositional bias: polar residues. Over residues 118-136 (PRPPTPIPPTGVKPEPAPR) the composition is skewed to pro residues. Residues 145–160 (SVSSTTPRTSATTGTT) show a composition bias toward low complexity.

This is an uncharacterized protein from Caenorhabditis elegans.